The following is a 335-amino-acid chain: Probable E3 ubiquitin-protein ligase BAH1-like (335 aa).

The SPX domain maps to 1-163 (MKFGETFTEY…SSENGKNFKL (163 aa)). Residues 231–280 (CAICLETVFNPYALKCGHIFCNSCACSAASVLIFQGIKAAPRHSKCPICR) form an RING-type zinc finger.

The protein belongs to the RING-type zinc finger family.

It carries out the reaction S-ubiquitinyl-[E2 ubiquitin-conjugating enzyme]-L-cysteine + [acceptor protein]-L-lysine = [E2 ubiquitin-conjugating enzyme]-L-cysteine + N(6)-ubiquitinyl-[acceptor protein]-L-lysine.. The protein operates within protein modification; protein ubiquitination. This Arabidopsis thaliana (Mouse-ear cress) protein is Probable E3 ubiquitin-protein ligase BAH1-like (RF178).